A 647-amino-acid chain; its full sequence is Threonine--tRNA ligase (647 aa).

Residues 1 to 61 enclose the TGS domain; it reads MIKITFPDGA…TEDGAIEIVT (61 aa). The catalytic stretch occupies residues 242–540; that stretch reads DHRKLGKELD…LIENYKGAFP (299 aa). Residues Cys336, His387, and His517 each coordinate Zn(2+).

This sequence belongs to the class-II aminoacyl-tRNA synthetase family. In terms of assembly, homodimer. It depends on Zn(2+) as a cofactor.

The protein resides in the cytoplasm. The catalysed reaction is tRNA(Thr) + L-threonine + ATP = L-threonyl-tRNA(Thr) + AMP + diphosphate + H(+). Its function is as follows. Catalyzes the attachment of threonine to tRNA(Thr) in a two-step reaction: L-threonine is first activated by ATP to form Thr-AMP and then transferred to the acceptor end of tRNA(Thr). Also edits incorrectly charged L-seryl-tRNA(Thr). The chain is Threonine--tRNA ligase from Streptococcus sanguinis (strain SK36).